The following is a 126-amino-acid chain: Aspartate 1-decarboxylase (126 aa).

The active-site Schiff-base intermediate with substrate; via pyruvic acid is Ser25. Residue Ser25 is modified to Pyruvic acid (Ser). Thr57 is a binding site for substrate. Tyr58 (proton donor) is an active-site residue. 73 to 75 (GAA) is a substrate binding site.

This sequence belongs to the PanD family. In terms of assembly, heterooctamer of four alpha and four beta subunits. The cofactor is pyruvate. Is synthesized initially as an inactive proenzyme, which is activated by self-cleavage at a specific serine bond to produce a beta-subunit with a hydroxyl group at its C-terminus and an alpha-subunit with a pyruvoyl group at its N-terminus.

It is found in the cytoplasm. The catalysed reaction is L-aspartate + H(+) = beta-alanine + CO2. The protein operates within cofactor biosynthesis; (R)-pantothenate biosynthesis; beta-alanine from L-aspartate: step 1/1. Catalyzes the pyruvoyl-dependent decarboxylation of aspartate to produce beta-alanine. The sequence is that of Aspartate 1-decarboxylase from Yersinia pseudotuberculosis serotype IB (strain PB1/+).